The chain runs to 202 residues: Small ribosomal subunit protein uS4 (202 aa).

The segment at 22–43 (TRKSARRAYPPGQHGQNRKKRS) is disordered. Residues 90–152 (MRLDNTVFRL…AQSRKLVEAN (63 aa)) enclose the S4 RNA-binding domain.

Belongs to the universal ribosomal protein uS4 family. Part of the 30S ribosomal subunit. Contacts protein S5. The interaction surface between S4 and S5 is involved in control of translational fidelity.

Its function is as follows. One of the primary rRNA binding proteins, it binds directly to 16S rRNA where it nucleates assembly of the body of the 30S subunit. Functionally, with S5 and S12 plays an important role in translational accuracy. In Nostoc punctiforme (strain ATCC 29133 / PCC 73102), this protein is Small ribosomal subunit protein uS4.